Reading from the N-terminus, the 314-residue chain is 4-hydroxy-3-methylbut-2-enyl diphosphate reductase (314 aa).

Cysteine 12 lines the [4Fe-4S] cluster pocket. 2 residues coordinate (2E)-4-hydroxy-3-methylbut-2-enyl diphosphate: histidine 41 and histidine 74. Dimethylallyl diphosphate-binding residues include histidine 41 and histidine 74. 2 residues coordinate isopentenyl diphosphate: histidine 41 and histidine 74. A [4Fe-4S] cluster-binding site is contributed by cysteine 96. Residue histidine 124 coordinates (2E)-4-hydroxy-3-methylbut-2-enyl diphosphate. Histidine 124 provides a ligand contact to dimethylallyl diphosphate. Histidine 124 contributes to the isopentenyl diphosphate binding site. Catalysis depends on glutamate 126, which acts as the Proton donor. Position 167 (threonine 167) interacts with (2E)-4-hydroxy-3-methylbut-2-enyl diphosphate. Residue cysteine 197 participates in [4Fe-4S] cluster binding. Residues serine 225, serine 226, asparagine 227, and serine 269 each coordinate (2E)-4-hydroxy-3-methylbut-2-enyl diphosphate. Dimethylallyl diphosphate contacts are provided by serine 225, serine 226, asparagine 227, and serine 269. Isopentenyl diphosphate-binding residues include serine 225, serine 226, asparagine 227, and serine 269.

It belongs to the IspH family. The cofactor is [4Fe-4S] cluster.

It carries out the reaction isopentenyl diphosphate + 2 oxidized [2Fe-2S]-[ferredoxin] + H2O = (2E)-4-hydroxy-3-methylbut-2-enyl diphosphate + 2 reduced [2Fe-2S]-[ferredoxin] + 2 H(+). It catalyses the reaction dimethylallyl diphosphate + 2 oxidized [2Fe-2S]-[ferredoxin] + H2O = (2E)-4-hydroxy-3-methylbut-2-enyl diphosphate + 2 reduced [2Fe-2S]-[ferredoxin] + 2 H(+). It functions in the pathway isoprenoid biosynthesis; dimethylallyl diphosphate biosynthesis; dimethylallyl diphosphate from (2E)-4-hydroxy-3-methylbutenyl diphosphate: step 1/1. Its pathway is isoprenoid biosynthesis; isopentenyl diphosphate biosynthesis via DXP pathway; isopentenyl diphosphate from 1-deoxy-D-xylulose 5-phosphate: step 6/6. Catalyzes the conversion of 1-hydroxy-2-methyl-2-(E)-butenyl 4-diphosphate (HMBPP) into a mixture of isopentenyl diphosphate (IPP) and dimethylallyl diphosphate (DMAPP). Acts in the terminal step of the DOXP/MEP pathway for isoprenoid precursor biosynthesis. This Haemophilus influenzae (strain ATCC 51907 / DSM 11121 / KW20 / Rd) protein is 4-hydroxy-3-methylbut-2-enyl diphosphate reductase.